Here is a 117-residue protein sequence, read N- to C-terminus: DNA-directed RNA polymerase subunit omega (117 aa).

Residues 96–105 (KEEAEEEAKQ) show a composition bias toward basic and acidic residues. Positions 96 to 117 (KEEAEEEAKQKNSRAAKAAAAE) are disordered. A compositionally biased stretch (low complexity) spans 108–117 (SRAAKAAAAE).

This sequence belongs to the RNA polymerase subunit omega family. As to quaternary structure, the RNAP catalytic core consists of 2 alpha, 1 beta, 1 beta' and 1 omega subunit. When a sigma factor is associated with the core the holoenzyme is formed, which can initiate transcription.

The catalysed reaction is RNA(n) + a ribonucleoside 5'-triphosphate = RNA(n+1) + diphosphate. Promotes RNA polymerase assembly. Latches the N- and C-terminal regions of the beta' subunit thereby facilitating its interaction with the beta and alpha subunits. The chain is DNA-directed RNA polymerase subunit omega (rpoZ) from Lactococcus lactis subsp. lactis (strain IL1403) (Streptococcus lactis).